The chain runs to 410 residues: Indoleamine 2,3-dioxygenase nanC (410 aa).

Residue histidine 309 participates in heme binding.

The protein belongs to the indoleamine 2,3-dioxygenase family. Heme serves as cofactor.

It carries out the reaction D-tryptophan + O2 = N-formyl-D-kynurenine. It catalyses the reaction L-tryptophan + O2 = N-formyl-L-kynurenine. Its pathway is secondary metabolite biosynthesis. Indoleamine 2,3-dioxygenase; part of the gene cluster that mediates the biosynthesis of the benzazepine alkaloid nanangelenin A which contains an unprecedented 3,4-dihydro-1-benzazepine-2,5-dione-N-prenyl-N-acetoxy-anthranilamide scaffold. The first step of nanangelenin biosynthesis is catalyzed by the indoleamine 2,3-dioxygenase nanC which produces N-formyl-kynurenine through the catabolism of tryptophan. The two-module NRPS nanA then utilizes anthranilate (Ant) and L-kynurenine (L-Kyn) to assemble the dipeptide product nanangelenin B. The first adenylation domain of nanA (A1) loads anthranilate onto the T1 domain, while A2 loads kynurenine, generated through spontaneous nonenzymatic deformylation of the nanC-supplied N-formyl-kynurenine. The peptide bond formation between the tethered amino acids is catalyzed by the first condensation domain (C1) between anthranilate's carbonyl carbon and kynurenine's aliphatic primary amine. The second C domain (C2) catalyzes the final cyclization event between the aromatic amine of kynurenine and the tethered carbonyl carbon, yielding nanangelenin B. The terminal T3 domain enhances the catalytic efficiency of C2, suggesting the T2-tethered Ant-L-Kyn is transferred to T3 prior to cyclization by C2. Once released from nanA, nanangelenin B is then prenylated by the prenyltransferase nanD to form nanangelenin C. Nanangelenin C is then N-hydroxylated by the FAD-dependent monooxygenase nanF and further acetylated by the acetyltransferase nanB to yield nanangelenin F. Finally, the N-methyltransferase nanE methylates the amide nitrogen of 1-benzazepine to convert nanangelenin F into nanangelenin A. NanE is also able to methylate most of the intermediates of the pathway such as nanangelenin B and nanangelenin C to produce nanangelenin D and nanangelenin E, respectively. The polypeptide is Indoleamine 2,3-dioxygenase nanC (Aspergillus nanangensis).